Reading from the N-terminus, the 255-residue chain is MEKKVSHVIDFLSNDEVQRQLGDPSISGISFSFDIRTLLKKHSGGNPQFFNYSMRDSFHEWCADIELGANTNELVTELLWDIIYLTEHQFLLPYYHGEHKKFQKKLVKRVGNHLNSLVNNSASKPTGSMTVNVRHVWRNVGDRYTLLYLPLYFKELIWCKANGSIFHVIIPHTKEHVIHEHKEWLLAILEMAGYWNLSHVRLYLPRDDLTNIQTLLKNLHWIGANLLPNENRNECNENDDITLSDETYIILECEC.

It belongs to the ODC antizyme family. In terms of assembly, interacts with ODC and thereby sterically blocks ODC homodimerization.

Ornithine decarboxylase (ODC) antizyme protein that negatively regulates ODC activity and intracellular polyamine biosynthesis in response to increased intracellular polyamine levels. Binds to ODC monomers, inhibiting the assembly of the functional ODC homodimer, and targets the monomers for ubiquitin-independent proteolytic destruction by the 26S proteasome. This Candida glabrata (strain ATCC 2001 / BCRC 20586 / JCM 3761 / NBRC 0622 / NRRL Y-65 / CBS 138) (Yeast) protein is Ornithine decarboxylase antizyme (OAZ1).